We begin with the raw amino-acid sequence, 1034 residues long: Phosphoenolpyruvate carboxylase (1034 aa).

Catalysis depends on residues His203 and Lys680.

Belongs to the PEPCase type 1 family. Mg(2+) serves as cofactor.

It catalyses the reaction oxaloacetate + phosphate = phosphoenolpyruvate + hydrogencarbonate. Functionally, forms oxaloacetate, a four-carbon dicarboxylic acid source for the tricarboxylic acid cycle. This is Phosphoenolpyruvate carboxylase (ppc) from Synechocystis sp. (strain ATCC 27184 / PCC 6803 / Kazusa).